We begin with the raw amino-acid sequence, 131 residues long: MSWQAYVDEHLMCEIEGHHLASAAILGHDGTVWAQSADFPQFKPEEITGIMKDFDEPGHLAPTGMFVATAKYMVIQGEPGAVIRGKKGAGGITIKKTGQALVVGIYDEPMTPGQCNMVVERLGDYLMKQGM.

An intrachain disulfide couples cysteine 13 to cysteine 115. Positions 81-97 match the Involved in PIP2 interaction motif; it reads AVIRGKKGAGGITIKKT. Threonine 111 is subject to Phosphothreonine.

The protein belongs to the profilin family. Occurs in many kinds of cells as a complex with monomeric actin in a 1:1 ratio. In terms of processing, phosphorylated by MAP kinases.

It localises to the cytoplasm. The protein localises to the cytoskeleton. Functionally, binds to actin and affects the structure of the cytoskeleton. At high concentrations, profilin prevents the polymerization of actin, whereas it enhances it at low concentrations. The protein is Profilin-5 of Olea europaea (Common olive).